We begin with the raw amino-acid sequence, 494 residues long: 3-octaprenyl-4-hydroxybenzoate carboxy-lyase (494 aa).

N172 contributes to the Mn(2+) binding site. Residues 175-177 (IYR), 189-191 (RWL), and 194-195 (RG) each bind prenylated FMN. E238 is a binding site for Mn(2+). D287 (proton donor) is an active-site residue.

Belongs to the UbiD family. Homohexamer. Prenylated FMN is required as a cofactor. The cofactor is Mn(2+).

Its subcellular location is the cell membrane. The enzyme catalyses a 4-hydroxy-3-(all-trans-polyprenyl)benzoate + H(+) = a 2-(all-trans-polyprenyl)phenol + CO2. It functions in the pathway cofactor biosynthesis; ubiquinone biosynthesis. Catalyzes the decarboxylation of 3-octaprenyl-4-hydroxy benzoate to 2-octaprenylphenol, an intermediate step in ubiquinone biosynthesis. The polypeptide is 3-octaprenyl-4-hydroxybenzoate carboxy-lyase (Escherichia coli O139:H28 (strain E24377A / ETEC)).